Here is a 359-residue protein sequence, read N- to C-terminus: MSLGRGKYDFYIGLGLAMTSSIFIGGSFILKKKGLLRLARKGSMRAGQGGHAYLKEWLWWAGLLSMGAGEVANFAAYAFAPATLVTPLGALSVLVSAILSSYFLNERLNLHGKIGCLLSILGSTVMVIHAPKEEEIETLNEMSHKLGDPGFVVFATFVVIVALIFIFVVGPRHGQTNILVYITICSVIGAFSVSCVKGLGIAIKELLAGKPVLQHPLAWILLFSLVVCVSTQINYLNRALDIFNTSIVTPIYYVFFTTSVLTCSAILFKEWQDMPVDDVIGTLSGFFTIIVGIFLLHAFKDVSFSLASLPVSFRKDEKAMNGNLSSMYEVLNNNEDDLPCGIEHTGENISRRNGNLPSF.

The Extracellular segment spans residues 1-9 (MSLGRGKYD). The helical transmembrane segment at 10–30 (FYIGLGLAMTSSIFIGGSFIL) threads the bilayer. Over 31-56 (KKKGLLRLARKGSMRAGQGGHAYLKE) the chain is Cytoplasmic. A helical membrane pass occupies residues 57–77 (WLWWAGLLSMGAGEVANFAAY). Alanine 78 is a topological domain (extracellular). Residues 79–99 (FAPATLVTPLGALSVLVSAIL) form a helical membrane-spanning segment. Topologically, residues 100 to 107 (SSYFLNER) are cytoplasmic. A helical membrane pass occupies residues 108–128 (LNLHGKIGCLLSILGSTVMVI). Residues 129–149 (HAPKEEEIETLNEMSHKLGDP) lie on the Extracellular side of the membrane. A helical membrane pass occupies residues 150–170 (GFVVFATFVVIVALIFIFVVG). Residues 171 to 175 (PRHGQ) lie on the Cytoplasmic side of the membrane. Residues 176–196 (TNILVYITICSVIGAFSVSCV) traverse the membrane as a helical segment. The Extracellular segment spans residues 197–215 (KGLGIAIKELLAGKPVLQH). Residues 216 to 236 (PLAWILLFSLVVCVSTQINYL) traverse the membrane as a helical segment. The Cytoplasmic segment spans residues 237–246 (NRALDIFNTS). Residues 247–267 (IVTPIYYVFFTTSVLTCSAIL) traverse the membrane as a helical segment. Residues 268-278 (FKEWQDMPVDD) lie on the Extracellular side of the membrane. Residues 279–299 (VIGTLSGFFTIIVGIFLLHAF) traverse the membrane as a helical segment. The Cytoplasmic segment spans residues 300-359 (KDVSFSLASLPVSFRKDEKAMNGNLSSMYEVLNNNEDDLPCGIEHTGENISRRNGNLPSF).

It belongs to the NIPA family. As to expression, widely expressed. Expressed at high levels in the kidney.

The protein localises to the cell membrane. The protein resides in the early endosome. The catalysed reaction is Mg(2+)(in) = Mg(2+)(out). Functionally, acts as a selective Mg(2+) transporter. This chain is Magnesium transporter NIPA2 (Nipa2), found in Mus musculus (Mouse).